The following is a 638-amino-acid chain: Protein NSP-INTERACTING KINASE 1 (638 aa).

The N-terminal stretch at 1-31 is a signal peptide; that stretch reads MESTIVMMMMITRSFFCFLGFLCLLCSSVHG. The Extracellular segment spans residues 32–248; sequence LLSPKGVNFE…AGGSRNHKMA (217 aa). Asparagine 92 and asparagine 103 each carry an N-linked (GlcNAc...) asparagine glycan. LRR repeat units follow at residues 104–128, 130–152, 153–175, and 177–200; these read LTNL…IGRL, RLET…VGYL, QSLQ…SLSN, and TQLA…AAKT. Asparagine 162, asparagine 175, asparagine 188, asparagine 219, and asparagine 231 each carry an N-linked (GlcNAc...) asparagine glycan. The helical transmembrane segment at 249-269 threads the bilayer; the sequence is IAVGSSVGTVSLIFIAVGLFL. Residues 270 to 638 lie on the Cytoplasmic side of the membrane; it reads WWRQRHNQNT…VQAMELSGPR (369 aa). Threonine 309 is subject to Phosphothreonine. One can recognise a Protein kinase domain in the interval 312 to 593; that stretch reads FSSKNLLGKG…EGDGLAEKWE (282 aa). 318–326 serves as a coordination point for ATP; it reads LGKGGYGNV. Threonine 335 carries the post-translational modification Phosphothreonine. Residue lysine 340 participates in ATP binding. 2 positions are modified to phosphoserine: serine 393 and serine 396. Positions 422–502 are interaction with geminivirus NSP protein; sequence YLHEQCDPKI…DVFGFGILLL (81 aa). Aspartate 435 functions as the Proton acceptor in the catalytic mechanism. Residues threonine 468, threonine 469, and threonine 474 each carry the phosphothreonine modification. Tyrosine 482 is subject to Phosphotyrosine. A Phosphoserine modification is found at serine 484. Threonine 485 bears the Phosphothreonine mark. Serine 489 carries the phosphoserine modification. Residue threonine 566 is modified to Phosphothreonine.

Belongs to the protein kinase superfamily. Ser/Thr protein kinase family. In terms of assembly, oligomer. Interacts with geminivirus nuclear shuttle protein (NSP). Interacts with RPL10A and RPL18B. Post-translationally, autophosphorylated. Expressed in seedlings, leaves, roots, stems and flowers.

Its subcellular location is the cell membrane. It catalyses the reaction L-seryl-[protein] + ATP = O-phospho-L-seryl-[protein] + ADP + H(+). The enzyme catalyses L-threonyl-[protein] + ATP = O-phospho-L-threonyl-[protein] + ADP + H(+). Inhibited by the viral nuclear shuttle protein (NSP) that binds to the region required for oligomerization. Functionally, involved in defense response to geminivirus and begomovirus infection via regulation of the nuclear trafficking of RPL10A. Phosphorylates RPL10A in vitro. Activation of NIK1 down-regulates cytosolic translation. This is Protein NSP-INTERACTING KINASE 1 from Arabidopsis thaliana (Mouse-ear cress).